The sequence spans 108 residues: UPF0060 membrane protein YnfA (108 aa).

At 1–5 (MLKTT) the chain is on the periplasmic side. Residues 6–26 (LLFFVTALCEIIGCFLPWLWL) traverse the membrane as a helical segment. Residues 27–30 (KRGA) are Cytoplasmic-facing. Residues 31–51 (SMWWLLPAAASLALFVWLLTL) form a helical membrane-spanning segment. Over 52 to 60 (HPAASGRVY) the chain is Periplasmic. A helical membrane pass occupies residues 61 to 81 (AAYGGVYVCTALLWLRVVDGV). Topologically, residues 82-84 (RLT) are cytoplasmic. The chain crosses the membrane as a helical span at residues 85–105 (VYDWCGALIALCGMLIIVVGW). Residues 106 to 108 (GRT) are Periplasmic-facing.

The protein belongs to the UPF0060 family.

The protein resides in the cell inner membrane. The chain is UPF0060 membrane protein YnfA from Salmonella schwarzengrund (strain CVM19633).